Reading from the N-terminus, the 323-residue chain is Beta-ketoacyl-[acyl-carrier-protein] synthase III (323 aa).

Catalysis depends on residues C113 and H250. Positions 251 to 255 (QANRR) are ACP-binding. N280 is a catalytic residue.

Belongs to the thiolase-like superfamily. FabH family. In terms of assembly, homodimer.

The protein localises to the cytoplasm. It carries out the reaction malonyl-[ACP] + acetyl-CoA + H(+) = 3-oxobutanoyl-[ACP] + CO2 + CoA. It functions in the pathway lipid metabolism; fatty acid biosynthesis. Catalyzes the condensation reaction of fatty acid synthesis by the addition to an acyl acceptor of two carbons from malonyl-ACP. Catalyzes the first condensation reaction which initiates fatty acid synthesis and may therefore play a role in governing the total rate of fatty acid production. Possesses both acetoacetyl-ACP synthase and acetyl transacylase activities. Its substrate specificity determines the biosynthesis of branched-chain and/or straight-chain of fatty acids. The sequence is that of Beta-ketoacyl-[acyl-carrier-protein] synthase III from Rhizobium meliloti (strain 1021) (Ensifer meliloti).